Consider the following 154-residue polypeptide: 3-hydroxyacyl-[acyl-carrier-protein] dehydratase FabZ (154 aa).

His-57 is an active-site residue.

The protein belongs to the thioester dehydratase family. FabZ subfamily.

It is found in the cytoplasm. It catalyses the reaction a (3R)-hydroxyacyl-[ACP] = a (2E)-enoyl-[ACP] + H2O. Its function is as follows. Involved in unsaturated fatty acids biosynthesis. Catalyzes the dehydration of short chain beta-hydroxyacyl-ACPs and long chain saturated and unsaturated beta-hydroxyacyl-ACPs. This chain is 3-hydroxyacyl-[acyl-carrier-protein] dehydratase FabZ, found in Allorhizobium ampelinum (strain ATCC BAA-846 / DSM 112012 / S4) (Agrobacterium vitis (strain S4)).